The sequence spans 391 residues: Processive diacylglycerol beta-glucosyltransferase (391 aa).

This sequence belongs to the glycosyltransferase 28 family. UgtP subfamily.

Its subcellular location is the cell membrane. The enzyme catalyses a 1,2-diacyl-3-O-(beta-D-glucopyranosyl)-sn-glycerol + UDP-alpha-D-glucose = a 1,2-diacyl-3-O-(beta-D-Glc-(1-&gt;6)-beta-D-Glc)-sn-glycerol + UDP + H(+). The catalysed reaction is a 1,2-diacyl-sn-glycerol + UDP-alpha-D-glucose = a 1,2-diacyl-3-O-(beta-D-glucopyranosyl)-sn-glycerol + UDP + H(+). It functions in the pathway glycolipid metabolism; diglucosyl-diacylglycerol biosynthesis. In terms of biological role, processive glucosyltransferase involved in the biosynthesis of both the bilayer- and non-bilayer-forming membrane glucolipids. Is able to successively transfer two glucosyl residues to diacylglycerol (DAG), thereby catalyzing the formation of beta-monoglucosyl-DAG (3-O-(beta-D-glucopyranosyl)-1,2-diacyl-sn-glycerol) and beta-diglucosyl-DAG (3-O-(beta-D-glucopyranosyl-beta-(1-&gt;6)-D-glucopyranosyl)-1,2-diacyl-sn-glycerol). Beta-diglucosyl-DAG is the predominant glycolipid found in Bacillales and is also used as a membrane anchor for lipoteichoic acid (LTA). The protein is Processive diacylglycerol beta-glucosyltransferase of Staphylococcus epidermidis (strain ATCC 35984 / DSM 28319 / BCRC 17069 / CCUG 31568 / BM 3577 / RP62A).